Consider the following 501-residue polypeptide: Lysine--tRNA ligase (501 aa).

Glu412 and Glu419 together coordinate Mg(2+).

It belongs to the class-II aminoacyl-tRNA synthetase family. As to quaternary structure, homodimer. The cofactor is Mg(2+).

Its subcellular location is the cytoplasm. The enzyme catalyses tRNA(Lys) + L-lysine + ATP = L-lysyl-tRNA(Lys) + AMP + diphosphate. This Pasteurella multocida (strain Pm70) protein is Lysine--tRNA ligase (lysS).